The primary structure comprises 34 residues: Photosystem II reaction center protein M (34 aa).

The chain crosses the membrane as a helical span at residues 7 to 27; that stretch reads GFVATLLFVLVPAIFLIILYI.

The protein belongs to the PsbM family. As to quaternary structure, PSII is composed of 1 copy each of membrane proteins PsbA, PsbB, PsbC, PsbD, PsbE, PsbF, PsbH, PsbI, PsbJ, PsbK, PsbL, PsbM, PsbT, PsbX, PsbY, PsbZ, Psb30/Ycf12, peripheral proteins PsbO, CyanoQ (PsbQ), PsbU, PsbV and a large number of cofactors. It forms dimeric complexes.

The protein localises to the cellular thylakoid membrane. Its function is as follows. One of the components of the core complex of photosystem II (PSII). PSII is a light-driven water:plastoquinone oxidoreductase that uses light energy to abstract electrons from H(2)O, generating O(2) and a proton gradient subsequently used for ATP formation. It consists of a core antenna complex that captures photons, and an electron transfer chain that converts photonic excitation into a charge separation. This subunit is found at the monomer-monomer interface. In Synechococcus sp. (strain RCC307), this protein is Photosystem II reaction center protein M.